We begin with the raw amino-acid sequence, 331 residues long: Glycerol-3-phosphate dehydrogenase [NAD(P)+] (331 aa).

NADPH-binding residues include tryptophan 14, arginine 34, and lysine 107. Sn-glycerol 3-phosphate contacts are provided by lysine 107, glycine 135, and serine 137. NADPH is bound at residue alanine 139. Residues lysine 190, aspartate 243, serine 253, arginine 254, and asparagine 255 each contribute to the sn-glycerol 3-phosphate site. Lysine 190 serves as the catalytic Proton acceptor. Arginine 254 serves as a coordination point for NADPH. NADPH is bound by residues valine 278 and glutamate 280.

The protein belongs to the NAD-dependent glycerol-3-phosphate dehydrogenase family.

The protein localises to the cytoplasm. It carries out the reaction sn-glycerol 3-phosphate + NAD(+) = dihydroxyacetone phosphate + NADH + H(+). The enzyme catalyses sn-glycerol 3-phosphate + NADP(+) = dihydroxyacetone phosphate + NADPH + H(+). It functions in the pathway membrane lipid metabolism; glycerophospholipid metabolism. Its function is as follows. Catalyzes the reduction of the glycolytic intermediate dihydroxyacetone phosphate (DHAP) to sn-glycerol 3-phosphate (G3P), the key precursor for phospholipid synthesis. This chain is Glycerol-3-phosphate dehydrogenase [NAD(P)+], found in Caulobacter vibrioides (strain ATCC 19089 / CIP 103742 / CB 15) (Caulobacter crescentus).